Consider the following 430-residue polypeptide: ATP-dependent RNA helicase RhlB (430 aa).

The Q motif motif lies at 9–37 (QKFSDFALHPQVIEALESKGFHNCTPIQA). The Helicase ATP-binding domain maps to 40-219 (LPLALSGRDV…FEQMNNAEYV (180 aa)). 53 to 60 (AQTGTGKT) is an ATP binding site. The short motif at 165-168 (DEAD) is the DEAD box element. In terms of domain architecture, Helicase C-terminal spans 245 to 390 (RLLQTLLEEE…VSKYNSDALM (146 aa)). The tract at residues 392–430 (DLPAPKRLTRPPRSNNGPRRHNNAPRRSGAPRNNRKRAD) is disordered.

This sequence belongs to the DEAD box helicase family. RhlB subfamily. As to quaternary structure, component of the RNA degradosome, which is a multiprotein complex involved in RNA processing and mRNA degradation.

It is found in the cytoplasm. The enzyme catalyses ATP + H2O = ADP + phosphate + H(+). In terms of biological role, DEAD-box RNA helicase involved in RNA degradation. Has RNA-dependent ATPase activity and unwinds double-stranded RNA. This is ATP-dependent RNA helicase RhlB from Pectobacterium carotovorum subsp. carotovorum (strain PC1).